The following is a 115-amino-acid chain: Holo-[acyl-carrier-protein] synthase (115 aa).

Residues D6 and E51 each contribute to the Mg(2+) site.

It belongs to the P-Pant transferase superfamily. AcpS family. It depends on Mg(2+) as a cofactor.

Its subcellular location is the cytoplasm. The catalysed reaction is apo-[ACP] + CoA = holo-[ACP] + adenosine 3',5'-bisphosphate + H(+). Functionally, transfers the 4'-phosphopantetheine moiety from coenzyme A to a Ser of acyl-carrier-protein. This is Holo-[acyl-carrier-protein] synthase from Campylobacter jejuni subsp. jejuni serotype O:6 (strain 81116 / NCTC 11828).